A 486-amino-acid chain; its full sequence is UDP-N-acetylmuramoyl-L-alanyl-D-glutamate--2,6-diaminopimelate ligase (486 aa).

Residue serine 30 coordinates UDP-N-acetyl-alpha-D-muramoyl-L-alanyl-D-glutamate. An ATP-binding site is contributed by 112-118 (GTNGKTT). UDP-N-acetyl-alpha-D-muramoyl-L-alanyl-D-glutamate-binding positions include 154 to 155 (TT), serine 181, glutamine 187, and arginine 189. At lysine 221 the chain carries N6-carboxylysine. Residues arginine 378, 402-405 (DNPR), glycine 455, and glutamate 459 each bind meso-2,6-diaminopimelate. Residues 402–405 (DNPR) carry the Meso-diaminopimelate recognition motif motif.

The protein belongs to the MurCDEF family. MurE subfamily. The cofactor is Mg(2+). Post-translationally, carboxylation is probably crucial for Mg(2+) binding and, consequently, for the gamma-phosphate positioning of ATP.

It localises to the cytoplasm. The enzyme catalyses UDP-N-acetyl-alpha-D-muramoyl-L-alanyl-D-glutamate + meso-2,6-diaminopimelate + ATP = UDP-N-acetyl-alpha-D-muramoyl-L-alanyl-gamma-D-glutamyl-meso-2,6-diaminopimelate + ADP + phosphate + H(+). Its pathway is cell wall biogenesis; peptidoglycan biosynthesis. Functionally, catalyzes the addition of meso-diaminopimelic acid to the nucleotide precursor UDP-N-acetylmuramoyl-L-alanyl-D-glutamate (UMAG) in the biosynthesis of bacterial cell-wall peptidoglycan. The protein is UDP-N-acetylmuramoyl-L-alanyl-D-glutamate--2,6-diaminopimelate ligase of Cytophaga hutchinsonii (strain ATCC 33406 / DSM 1761 / CIP 103989 / NBRC 15051 / NCIMB 9469 / D465).